Here is a 479-residue protein sequence, read N- to C-terminus: Caspase-8 (479 aa).

Residues 1 to 216 (MDFSRNLYDI…TISDSPREQD (216 aa)) constitute a propeptide that is removed on maturation. 2 DED domains span residues 2-80 (DFSR…TYLN) and 100-177 (AYRV…IIND). Phosphoserine occurs at positions 188 and 211. Lys224 bears the N6-acetyllysine mark. Residue His317 is part of the active site. Tyr334 carries the phosphotyrosine modification. The active site involves Cys360. The propeptide occupies 375–384 (SEEQPYLEMD). Tyr380 bears the Phosphotyrosine; by SRC mark. Ser387 is modified (phosphoserine; by CDK1). Arg413 is subject to (Microbial infection) ADP-riboxanated arginine.

It belongs to the peptidase C14A family. As to quaternary structure, heterotetramer that consists of two anti-parallel arranged heterodimers, each one formed by a 18 kDa (p18) and a 10 kDa (p10) subunit. Component of the death-induced signaling complex (DISC) composed of cell surface receptor FAS/CD95 or TNFRSF1A, adapter protein FADD and the CASP8 protease; recruitment of CASP8 to the complex is required for processing of CASP8 into the p18 and p10 subunits. Component of the AIM2 PANoptosome complex, a multiprotein complex that drives inflammatory cell death (PANoptosis). Interacts with CFLAR and PEA15. Interacts with TNFAIP8L2. Interacts with CASP8AP2. Interacts with RFFL and RNF34; negatively regulate CASP8 through proteasomal degradation. Interacts with NOL3; decreases CASP8 activity in a mitochondria localization- and phosphorylation-dependent manner and this interaction is dissociated by calcium. Interacts with UBR2ca. Interacts with RIPK1. Interacts with stimulated TNFRSF10B; this interaction is followed by CASP8 proteolytic cleavage and activation. Interacts (phosphorylated on Tyr-380) with PIK3R1. In terms of assembly, interacts at the endoplasmic reticulum with a complex containing BCAP31, BAP29, BCL2 and/or BCL2L1. (Microbial infection) Interacts with human cytomegalovirus/HHV-5 protein vICA/UL36; this interaction inhibits CASP8 activation. As to quaternary structure, (Microbial infection) Interacts with NleF from pathogenic E.coli. In terms of assembly, (Microbial infection) Interacts with molluscum contagiosum virus protein MC160. (Microbial infection) Interacts (via RIP homotypic interaction motif) with herpes simplex virus 1/HHV-1 protein RIR1/ICP6 (via RIP homotypic interaction motif); this interaction prevents necroptosis activation. As to quaternary structure, (Microbial infection) Interacts (via RIP homotypic interaction motif) with herpes simplex virus 2/HHV-2 protein RIR1/ICP10 (via RIP homotypic interaction motif); this interaction prevents necroptosis activation. Generation of the p10 and p18 subunits requires association with the death-inducing signaling complex (DISC), whereas additional processing is likely due to the autocatalytic activity of the activated protease. GZMB and CASP10 can be involved in these processing events. Post-translationally, phosphorylation on Ser-387 during mitosis by CDK1 inhibits activation by proteolysis and prevents apoptosis. Phosphorylation on Tyr-380 by SRC is mediated by interaction with the SRC SH2 domain and does not affect dimerization or recruitment to the death-inducing signaling complex (DISC) but negatively regulates DISC-mediated processing and activation of CASP8, down-regulating its proapoptotic function. Phosphorylation on Tyr-380 also enhances localization to lamellipodia in migrating cells. In terms of processing, (Microbial infection) ADP-riboxanation by C.violaceum CopC blocks CASP8 processing, preventing CASP8 activation and ability to mediate extrinsic apoptosis. (Microbial infection) Proteolytically cleaved by the cowpox virus CRMA death inhibitory protein. Isoform 1, isoform 5 and isoform 7 are expressed in a wide variety of tissues. Highest expression in peripheral blood leukocytes, spleen, thymus and liver. Barely detectable in brain, testis and skeletal muscle.

It localises to the cytoplasm. It is found in the nucleus. The protein resides in the cell projection. Its subcellular location is the lamellipodium. It catalyses the reaction Strict requirement for Asp at position P1 and has a preferred cleavage sequence of (Leu/Asp/Val)-Glu-Thr-Asp-|-(Gly/Ser/Ala).. Its activity is regulated as follows. CASP8 activity is restricted by RIPK1. Inhibited by the effector protein NleF that is produced by pathogenic E.coli; this inhibits apoptosis. Thiol protease that plays a key role in programmed cell death by acting as a molecular switch for apoptosis, necroptosis and pyroptosis, and is required to prevent tissue damage during embryonic development and adulthood. Initiator protease that induces extrinsic apoptosis by mediating cleavage and activation of effector caspases responsible for FAS/CD95-mediated and TNFRSF1A-induced cell death. Cleaves and activates effector caspases CASP3, CASP4, CASP6, CASP7, CASP9 and CASP10. Binding to the adapter molecule FADD recruits it to either receptor FAS/TNFRSF6 or TNFRSF1A. The resulting aggregate called the death-inducing signaling complex (DISC) performs CASP8 proteolytic activation. The active dimeric enzyme is then liberated from the DISC and free to activate downstream apoptotic proteases. Proteolytic fragments of the N-terminal propeptide (termed CAP3, CAP5 and CAP6) are likely retained in the DISC. In addition to extrinsic apoptosis, also acts as a negative regulator of necroptosis: acts by cleaving RIPK1 at 'Asp-324', which is crucial to inhibit RIPK1 kinase activity, limiting TNF-induced apoptosis, necroptosis and inflammatory response. Also able to initiate pyroptosis by mediating cleavage and activation of gasdermin-C and -D (GSDMC and GSDMD, respectively): gasdermin cleavage promotes release of the N-terminal moiety that binds to membranes and forms pores, triggering pyroptosis. Initiates pyroptosis following inactivation of MAP3K7/TAK1. Also acts as a regulator of innate immunity by mediating cleavage and inactivation of N4BP1 downstream of TLR3 or TLR4, thereby promoting cytokine production. May participate in the Granzyme B (GZMB) cell death pathways. Cleaves PARP1 and PARP2. Independent of its protease activity, promotes cell migration following phosphorylation at Tyr-380. Its function is as follows. Lacks the catalytic site and may interfere with the pro-apoptotic activity of the complex. In terms of biological role, lacks the catalytic site and may interfere with the pro-apoptotic activity of the complex. Acts as an inhibitor of the caspase cascade. This is Caspase-8 from Homo sapiens (Human).